Reading from the N-terminus, the 560-residue chain is Putative transport protein VFMJ11_0927 (560 aa).

The next 5 membrane-spanning stretches (helical) occupy residues 8-28, 37-57, 66-86, 94-114, and 161-181; these read LLSQ…LFIA, LGSS…GYTF, FMLF…GIFL, LLVL…GHYF, and NLSV…ILLA. RCK C-terminal domains lie at 203-292 and 293-376; these read RGIG…FRNG and KEVF…KIGF. 5 consecutive transmembrane segments (helical) span residues 386 to 406, 409 to 429, 451 to 471, 478 to 498, and 539 to 559; these read LLAF…TMSF, VTFG…LGFL, GLLV…NEYF, VLAA…LVGA, and AGTY…MILL.

This sequence belongs to the AAE transporter (TC 2.A.81) family. YbjL subfamily.

It is found in the cell membrane. The sequence is that of Putative transport protein VFMJ11_0927 from Aliivibrio fischeri (strain MJ11) (Vibrio fischeri).